Consider the following 513-residue polypeptide: ATP synthase subunit alpha (513 aa).

169–176 (GDRQTGKT) is a binding site for ATP.

It belongs to the ATPase alpha/beta chains family. F-type ATPases have 2 components, CF(1) - the catalytic core - and CF(0) - the membrane proton channel. CF(1) has five subunits: alpha(3), beta(3), gamma(1), delta(1), epsilon(1). CF(0) has three main subunits: a(1), b(2) and c(9-12). The alpha and beta chains form an alternating ring which encloses part of the gamma chain. CF(1) is attached to CF(0) by a central stalk formed by the gamma and epsilon chains, while a peripheral stalk is formed by the delta and b chains.

Its subcellular location is the cell inner membrane. It catalyses the reaction ATP + H2O + 4 H(+)(in) = ADP + phosphate + 5 H(+)(out). Produces ATP from ADP in the presence of a proton gradient across the membrane. The alpha chain is a regulatory subunit. In Ruegeria sp. (strain TM1040) (Silicibacter sp.), this protein is ATP synthase subunit alpha.